A 363-amino-acid chain; its full sequence is 43 kDa protein (363 aa).

The sequence is that of 43 kDa protein (P43) from Lepidoptera (butterflies and moths).